The following is a 274-amino-acid chain: Dermonecrotic toxin SdSicTox-betaIIB1bxii (274 aa).

H5 is a catalytic residue. Mg(2+) is bound by residues E25 and D27. H41 serves as the catalytic Nucleophile. Intrachain disulfides connect C45/C51 and C47/C190. D85 serves as a coordination point for Mg(2+).

It belongs to the arthropod phospholipase D family. Class II subfamily. The cofactor is Mg(2+). As to expression, expressed by the venom gland.

Its subcellular location is the secreted. The catalysed reaction is an N-(acyl)-sphingosylphosphocholine = an N-(acyl)-sphingosyl-1,3-cyclic phosphate + choline. The enzyme catalyses an N-(acyl)-sphingosylphosphoethanolamine = an N-(acyl)-sphingosyl-1,3-cyclic phosphate + ethanolamine. It carries out the reaction a 1-acyl-sn-glycero-3-phosphocholine = a 1-acyl-sn-glycero-2,3-cyclic phosphate + choline. It catalyses the reaction a 1-acyl-sn-glycero-3-phosphoethanolamine = a 1-acyl-sn-glycero-2,3-cyclic phosphate + ethanolamine. Its function is as follows. Dermonecrotic toxins cleave the phosphodiester linkage between the phosphate and headgroup of certain phospholipids (sphingolipid and lysolipid substrates), forming an alcohol (often choline) and a cyclic phosphate. This toxin acts on sphingomyelin (SM). It may also act on ceramide phosphoethanolamine (CPE), lysophosphatidylcholine (LPC) and lysophosphatidylethanolamine (LPE), but not on lysophosphatidylserine (LPS), and lysophosphatidylglycerol (LPG). It acts by transphosphatidylation, releasing exclusively cyclic phosphate products as second products. Induces dermonecrosis, hemolysis, increased vascular permeability, edema, inflammatory response, and platelet aggregation. In Sicarius cf. damarensis (strain GJB-2008) (Six-eyed sand spider), this protein is Dermonecrotic toxin SdSicTox-betaIIB1bxii.